Here is a 336-residue protein sequence, read N- to C-terminus: Iron-uptake system permease protein FeuC (336 aa).

9 helical membrane-spanning segments follow: residues 7 to 27 (LFIA…SFSV), 57 to 77 (VVMA…IQAI), 85 to 105 (PGIL…MLLF), 120 to 140 (MPLF…IFAW), 150 to 170 (IILV…FLSL), 191 to 211 (ANWT…PILI), 246 to 266 (VAII…GLIA), 280 to 300 (YILP…DFAG), and 308 to 328 (EVPA…YLLF).

The protein belongs to the binding-protein-dependent transport system permease family. FecCD subfamily. As to quaternary structure, the complex is composed of one ATP-binding protein (YusV), two transmembrane proteins (FeuB and FeuC) and a solute-binding protein (FeuA).

Its subcellular location is the cell membrane. Its function is as follows. Involved in the uptake of iron. Probably responsible for the translocation of the substrate across the membrane. In terms of biological role, part of the ABC transporter complex FeuABC/YusV involved in import of the catecholate siderophores bacillibactin and enterobactin. The polypeptide is Iron-uptake system permease protein FeuC (feuC) (Bacillus subtilis (strain 168)).